We begin with the raw amino-acid sequence, 760 residues long: Formin-like protein 8 (760 aa).

The signal sequence occupies residues 1–29 (MAAMFNHPWPNLTLIYFFFIVVLPFQSLS). Residues 52–63 (PLLPPSSNPSPP) are compositionally biased toward pro residues. The segment at 52–71 (PLLPPSSNPSPPSNNSSSSD) is disordered. Residues 78–98 (AVLITAASTLLVAGVFFFCLQ) traverse the membrane as a helical segment. The segment at 204-313 (TEIPLLRGRS…VKLKPLHWDK (110 aa)) is disordered. The segment covering 253 to 274 (TPSPPPPIKKGSSPSPPPPPPV) has biased composition (pro residues). Positions 296–732 (SGGETSKQVK…GSPISPSSQR (437 aa)) constitute an FH2 domain.

Belongs to the formin-like family. Class-I subfamily. Interacts with profilin.

It is found in the cell membrane. In terms of biological role, might be involved in the organization and polarity of the actin cytoskeleton. Interacts with the barbed end of actin filaments and nucleates actin-filament polymerization in vitro. In Arabidopsis thaliana (Mouse-ear cress), this protein is Formin-like protein 8 (FH8).